We begin with the raw amino-acid sequence, 507 residues long: Anaerobic nitric oxide reductase transcription regulator NorR (507 aa).

Position 57 is a 4-aspartylphosphate (D57). Residues 188–417 (IIGLSSVMQQ…LEHSIYRAAI (230 aa)) enclose the Sigma-54 factor interaction domain. ATP-binding positions include 216-223 (GETGVGKE) and 279-288 (ADNGTLFLDE). The segment at residues 483–502 (WAATARKLELDSGNLHRLAK) is a DNA-binding region (H-T-H motif).

It participates in nitrogen metabolism; nitric oxide reduction. Its function is as follows. Required for the expression of anaerobic nitric oxide (NO) reductase, acts as a transcriptional activator for at least the norVW operon. Activation also requires sigma-54. The chain is Anaerobic nitric oxide reductase transcription regulator NorR from Serratia proteamaculans (strain 568).